Consider the following 345-residue polypeptide: Protoheme IX farnesyltransferase (345 aa).

A run of 9 helical transmembrane segments spans residues 33–53 (VMSLVVFTALTGLLAARTPIH), 54–74 (PLLGAVAVLCIAIGAGASGAL), 105–125 (ATLGVVLSLLSVMLMGMAINW), 126–146 (LAAGLLAFTIVFYAVVYTMWL), 154–174 (IVIGGLAGALPPAIGWAAATG), 182–202 (LMVLIIFLWTPPHFWALSLYI), 226–246 (QILLYSLALIPVCLAPAFTGL), 247–267 (GGWLYLAVSGLGGLVFLTLAV), and 315–335 (ILYLFALFAALLAEAVLGLPI).

Belongs to the UbiA prenyltransferase family. Protoheme IX farnesyltransferase subfamily.

The protein localises to the cell inner membrane. It carries out the reaction heme b + (2E,6E)-farnesyl diphosphate + H2O = Fe(II)-heme o + diphosphate. The protein operates within porphyrin-containing compound metabolism; heme O biosynthesis; heme O from protoheme: step 1/1. In terms of biological role, converts heme B (protoheme IX) to heme O by substitution of the vinyl group on carbon 2 of heme B porphyrin ring with a hydroxyethyl farnesyl side group. This Caulobacter sp. (strain K31) protein is Protoheme IX farnesyltransferase.